We begin with the raw amino-acid sequence, 116 residues long: Ribosome-binding factor A (116 aa).

This sequence belongs to the RbfA family. Monomer. Binds 30S ribosomal subunits, but not 50S ribosomal subunits or 70S ribosomes.

The protein localises to the cytoplasm. One of several proteins that assist in the late maturation steps of the functional core of the 30S ribosomal subunit. Associates with free 30S ribosomal subunits (but not with 30S subunits that are part of 70S ribosomes or polysomes). Required for efficient processing of 16S rRNA. May interact with the 5'-terminal helix region of 16S rRNA. In Streptococcus pneumoniae (strain ATCC BAA-255 / R6), this protein is Ribosome-binding factor A.